A 177-amino-acid chain; its full sequence is DELTA-stichotoxin-Hcr4b (177 aa).

The plays an important role in the hemolytic activity stretch occupies residues Ala-3–Ala-12. The N-terminal region stretch occupies residues Gly-11–Ser-30. Positions 54, 87, 105, 107, 133, 137, and 138 each coordinate phosphocholine. Positions Ser-105–Lys-120 are trp-rich region, which is important for the binding to lipid membrane.

It belongs to the actinoporin family. Sea anemone subfamily. Octamer or nonamer in membranes. Monomer in the soluble state.

The protein localises to the secreted. It is found in the nematocyst. It localises to the target cell membrane. Pore-forming protein that forms cations-selective hydrophilic pores of around 1 nm and causes cardiac stimulation and cytolysis. Pore formation is a multi-step process that involves specific recognition of membrane sphingomyelin (but neither cholesterol nor phosphatidylcholine) using aromatic rich region and adjacent phosphocholine (POC) binding site, firm binding to the membrane (mainly driven by hydrophobic interactions) accompanied by the transfer of the N-terminal region to the lipid-water interface and finally pore formation after oligomerization of monomers. Cytolytic effects include red blood cells hemolysis, platelet aggregation and lysis, cytotoxic and cytostatic effects on fibroblasts. Lethality in mammals has been ascribed to severe vasospasm of coronary vessels, cardiac arrhythmia, and inotropic effects. Preincubation with exogenous sphingomyeline causes complete loss of hemolytic activity. This is DELTA-stichotoxin-Hcr4b from Radianthus crispa (Leathery sea anemone).